A 190-amino-acid chain; its full sequence is CASP-like protein 1E1 (190 aa).

The interval 1–23 is disordered; it reads MEHESKNKVDGMEMEKGKKESGS. The Cytoplasmic segment spans residues 1-28; the sequence is MEHESKNKVDGMEMEKGKKESGSRKGLE. Residues 29-49 traverse the membrane as a helical segment; that stretch reads LTMRVLALVLTMVAATVLGVA. Residues 50 to 83 lie on the Extracellular side of the membrane; the sequence is KQTKVVPIKLIPTLPPLNVSTTAKASYLSAFVYN. A glycan (N-linked (GlcNAc...) asparagine) is linked at asparagine 67. A helical membrane pass occupies residues 84–104; the sequence is ISANAIACGYTAISIVIVMIS. The Cytoplasmic portion of the chain corresponds to 105–111; that stretch reads KGKRSKS. Residues 112–132 form a helical membrane-spanning segment; it reads LLMAVLIGDLMMVALLFSSTG. Residues 133 to 163 lie on the Extracellular side of the membrane; the sequence is AAGAIGLMGRHGNKHVMWKKVCGVFGKFCNQ. A helical transmembrane segment spans residues 164-184; the sequence is AAVSVAITLIASVVFMLLVVL. The Cytoplasmic portion of the chain corresponds to 185–190; the sequence is DALKLP.

The protein belongs to the Casparian strip membrane proteins (CASP) family. Homodimer and heterodimers.

The protein localises to the cell membrane. The chain is CASP-like protein 1E1 from Arabidopsis thaliana (Mouse-ear cress).